The chain runs to 216 residues: Probable GTP-binding protein EngB (216 aa).

One can recognise an EngB-type G domain in the interval 27 to 201 (EGIEVAFAGR…REKLDTWFSE (175 aa)). GTP contacts are provided by residues 35 to 42 (GRSNAGKS), 62 to 66 (GRTQL), 80 to 83 (DLPG), 147 to 150 (TKAD), and 180 to 182 (FSS). The Mg(2+) site is built by Ser42 and Thr64.

Belongs to the TRAFAC class TrmE-Era-EngA-EngB-Septin-like GTPase superfamily. EngB GTPase family. It depends on Mg(2+) as a cofactor.

In terms of biological role, necessary for normal cell division and for the maintenance of normal septation. In Yersinia pseudotuberculosis serotype O:1b (strain IP 31758), this protein is Probable GTP-binding protein EngB.